A 226-amino-acid polypeptide reads, in one-letter code: Putative DNA repair protein recA homolog 4 (226 aa).

41–48 (GPEASGKT) contacts ATP.

The protein belongs to the RecA family.

The protein resides in the cytoplasm. Involved in recombination ability and DNA strand transfer activity. This is Putative DNA repair protein recA homolog 4 from Arabidopsis thaliana (Mouse-ear cress).